Here is a 329-residue protein sequence, read N- to C-terminus: MEGASAECVRAEPFHRVTPLLESWALSQVAGMPVFLKYENVQIAGSFKIRGIGHFCQQMAKRGCRHLVCSSGGNAGIAAAYSAQKLGIPVTIVLPESTSKQVVRRLEGEGAEVQLTGKVWDEANVRAQELATRDGWVNVSPFDHPLIWEGNASLVRELKESLRTPPGAVVLAVGGGGLLAGVVAGLLEVGWQHVPIVAMETRGAHSFNAALLAGRLVTLPDITSVARSLGAKTVAARTLECAKECEVLSEVVEDREAVRAVQRFLDDERMLVEPACGAALAAVYSGILGRLQTEGRLSPALDSVVVIVCGGNNISSQQLQELKTQLNCS.

N-acetylmethionine is present on methionine 1. Lysine 48 carries the post-translational modification N6-(pyridoxal phosphate)lysine.

This sequence belongs to the serine/threonine dehydratase family. As to quaternary structure, monomer. Homodimer. It depends on pyridoxal 5'-phosphate as a cofactor.

It carries out the reaction L-serine = pyruvate + NH4(+). The catalysed reaction is L-threonine = 2-oxobutanoate + NH4(+). The enzyme catalyses L-glutamate = D-glutamate. With respect to regulation, serine dehydratase activity is inhibited by manganese chloride, ferrous chloride, cobalt chloride, cupric chloride, nickel chloride and zinc chloride. Glutamate racemase activity is inhibited by manganese chloride, ferrous chloride, cupric chloride and zinc chloride. In terms of biological role, catalyzes the pyridoxal-phosphate-dependent dehydrative deamination of L-threonine and L-serine to ammonia and alpha-ketobutyrate and pyruvate, respectively. Also exhibits racemase activity towards L-glutamate and D-glutamate. In Rattus norvegicus (Rat), this protein is Serine dehydratase-like (Sdsl).